The following is a 181-amino-acid chain: Ribosome maturation factor RimM (181 aa).

The PRC barrel domain occupies 98–177 (EGEFFYCDLI…KITTHNAKTL (80 aa)).

Belongs to the RimM family. As to quaternary structure, binds ribosomal protein uS19.

It is found in the cytoplasm. In terms of biological role, an accessory protein needed during the final step in the assembly of 30S ribosomal subunit, possibly for assembly of the head region. Essential for efficient processing of 16S rRNA. May be needed both before and after RbfA during the maturation of 16S rRNA. It has affinity for free ribosomal 30S subunits but not for 70S ribosomes. The chain is Ribosome maturation factor RimM from Helicobacter pylori (strain J99 / ATCC 700824) (Campylobacter pylori J99).